The following is a 107-amino-acid chain: MSLVIDIADTIVSLTALIGLIITLIKFHSQNKEDAIMQIRKIAQEEIVNFLDTDKFKHSIIDIMNESNVNSKVNDIDSKITQLLAILCYTDSKLKDTELCRSSDRSK.

Residues methionine 1 to valine 4 lie on the Cytoplasmic side of the membrane. The helical transmembrane segment at isoleucine 5–isoleucine 25 threads the bilayer. Topologically, residues lysine 26–lysine 107 are extracellular.

It localises to the host membrane. This is an uncharacterized protein from Acidianus sp. F28 (AFV-2).